The following is a 485-amino-acid chain: NADH-quinone oxidoreductase subunit N (485 aa).

Helical transmembrane passes span 8 to 28 (LIALLPLLIVGLTVVVVMLCI), 35 to 55 (FINSTLTVIGINLALLSLWFV), 75 to 95 (FYTGLVLVASLATSTLAYAWL), 105 to 125 (FYLLVLIATMGGILLASANHL), 127 to 147 (ALFLGIELISLPLFGMVGYAF), 159 to 179 (YTLLSAAAASFLLFGMALVYA), 203 to 223 (LLAGLGMMVVGLGFKLSLVPF), 235 to 255 (PVPVSTFLATASKIAIFAVVM), 271 to 291 (LVLAIIAFASMLFGNLMALSQ), 303 to 323 (IAHLGYLLVGLIVVQAHTLAL), 326 to 346 (VGVYLAGYLFASLGAFGVVSL), 371 to 393 (LLSSVLTVMMLSLAGIPMTLGFI), 406 to 426 (HLGWLTGAVVAGSAIGLFYYL), and 449 to 469 (ALTAGGVVVLISSLLVLLLGL).

It belongs to the complex I subunit 2 family. In terms of assembly, NDH-1 is composed of 13 different subunits. Subunits NuoA, H, J, K, L, M, N constitute the membrane sector of the complex.

It localises to the cell inner membrane. It carries out the reaction a quinone + NADH + 5 H(+)(in) = a quinol + NAD(+) + 4 H(+)(out). In terms of biological role, NDH-1 shuttles electrons from NADH, via FMN and iron-sulfur (Fe-S) centers, to quinones in the respiratory chain. The immediate electron acceptor for the enzyme in this species is believed to be ubiquinone. Couples the redox reaction to proton translocation (for every two electrons transferred, four hydrogen ions are translocated across the cytoplasmic membrane), and thus conserves the redox energy in a proton gradient. This chain is NADH-quinone oxidoreductase subunit N, found in Sodalis glossinidius (strain morsitans).